The following is a 583-amino-acid chain: 1-deoxy-D-xylulose-5-phosphate synthase (583 aa).

Residues His74 and 115–117 each bind thiamine diphosphate; that span reads GHS. Asp146 provides a ligand contact to Mg(2+). Thiamine diphosphate contacts are provided by residues 147–148, Asn175, Phe244, and Glu327; that span reads GG. Asn175 is a Mg(2+) binding site.

Belongs to the transketolase family. DXPS subfamily. As to quaternary structure, homodimer. The cofactor is Mg(2+). It depends on thiamine diphosphate as a cofactor.

It carries out the reaction D-glyceraldehyde 3-phosphate + pyruvate + H(+) = 1-deoxy-D-xylulose 5-phosphate + CO2. It participates in metabolic intermediate biosynthesis; 1-deoxy-D-xylulose 5-phosphate biosynthesis; 1-deoxy-D-xylulose 5-phosphate from D-glyceraldehyde 3-phosphate and pyruvate: step 1/1. Functionally, catalyzes the acyloin condensation reaction between C atoms 2 and 3 of pyruvate and glyceraldehyde 3-phosphate to yield 1-deoxy-D-xylulose-5-phosphate (DXP). The polypeptide is 1-deoxy-D-xylulose-5-phosphate synthase (Myxococcus xanthus (strain DK1622)).